A 220-amino-acid chain; its full sequence is GTP cyclohydrolase 1 (220 aa).

Zn(2+) contacts are provided by cysteine 109, histidine 112, and cysteine 180.

The protein belongs to the GTP cyclohydrolase I family. As to quaternary structure, homomer.

It catalyses the reaction GTP + H2O = 7,8-dihydroneopterin 3'-triphosphate + formate + H(+). The protein operates within cofactor biosynthesis; 7,8-dihydroneopterin triphosphate biosynthesis; 7,8-dihydroneopterin triphosphate from GTP: step 1/1. The sequence is that of GTP cyclohydrolase 1 from Edwardsiella ictaluri (strain 93-146).